Reading from the N-terminus, the 731-residue chain is SUN domain-containing protein 2 (731 aa).

Disordered stretches follow at residues 1–69 (MSRR…SHTS) and 106–142 (SGDLRGRRRRGTGGSESSKANGLTAESKASEDFFGSS). The LMNA-binding stretch occupies residues 1 to 128 (MSRRSQRLTR…GSESSKANGL (128 aa)). Over 1–226 (MSRRSQRLTR…SRHFSLNLKS (226 aa)) the chain is Nuclear. The residue at position 12 (Ser12) is a Phosphoserine. The segment covering 18–33 (GGSSSSGASSVAGSQG) has biased composition (low complexity). Phosphoserine is present on residues Ser39 and Ser55. A Phosphothreonine modification is found at Thr117. 3 positions are modified to phosphoserine: Ser120, Ser123, and Ser147. A helical transmembrane segment spans residues 227–247 (FLWFLLLLLLLTGLTYGAWHF). Over 248–731 (YPLGLQTLQP…RFRVHGEPAH (484 aa)) the chain is Perinuclear space. Coiled coils occupy residues 396–452 (QESE…VADE) and 486–519 (RSGLLQRDEMHAQLQELENKILTKMAEMQGKSAR). Positions 521–731 (AAASLGQILQ…RFRVHGEPAH (211 aa)) are sufficient for interaction with SYNE1 and SYNE2. One can recognise an SUN domain in the interval 569-730 (GASVISTRCS…YRFRVHGEPA (162 aa)). Asn650 carries an N-linked (GlcNAc...) asparagine glycan.

Core component of the LINC complex which is composed of inner nuclear membrane SUN domain-containing proteins coupled to outer nuclear membrane KASH domain-containing nesprins. SUN and KASH domain-containing proteins seem to bind each other promiscuously; however, differentially expression of LINC complex constituents is giving rise to specific assemblies. At least SUN1/2-containing core LINC complexes are proposed to be hexameric composed of three protomers of each KASH and SUN domain-containing protein. Interacts with SYNE2; the SUN2:SYNE2/KASH2 LINC complex is a heterohexamer; the homotrimeric cloverleave-like conformation of the SUN domain is a prerequisite for LINC complex formation in which three separate SYNE2/KASH2 peptides bind at the interface of adjacent SUN domains. Component of a probable SUN2:KASH5 LINC complex. Interacts with SYNE1 and SYNE3; probably forming respective LINC complexes. Interacts with A-type lamin. Interaction with lamins B1 and C is hardly detectable. Interacts with EMD. Interacts with RAB5A. Interacts with TMEM43 and TMEM201. Interacts with IRAG2. Post-translationally, the disulfide bond with SYNE2 is required for stability of the SUN2:SYNE2/KASH2 LINC complex under tensile forces though not required for the interaction. The disulfide bond is proposed to be conserved in LINC complexes involved in force transmission. As to expression, highly expressed in heart, placenta and muscle.

The protein resides in the nucleus inner membrane. Its subcellular location is the nucleus envelope. It localises to the endosome membrane. In terms of biological role, as a component of the LINC (LInker of Nucleoskeleton and Cytoskeleton) complex, involved in the connection between the nuclear lamina and the cytoskeleton. The nucleocytoplasmic interactions established by the LINC complex play an important role in the transmission of mechanical forces across the nuclear envelope and in nuclear movement and positioning. Specifically, SYNE2 and SUN2 assemble in arrays of transmembrane actin-associated nuclear (TAN) lines which are bound to F-actin cables and couple the nucleus to retrograde actin flow during actin-dependent nuclear movement. Required for interkinetic nuclear migration (INM) and essential for nucleokinesis and centrosome-nucleus coupling during radial neuronal migration in the cerebral cortex and during glial migration. Required for nuclear migration in retinal photoreceptor progenitors implicating association with cytoplasmic dynein-dynactin and kinesin motor complexes, and probably B-type lamins; SUN1 and SUN2 seem to act redundantly. The SUN1/2:KASH5 LINC complex couples telomeres to microtubules during meiosis; SUN1 and SUN2 seem to act at least partial redundantly. Anchors chromosome movement in the prophase of meiosis and is involved in selective gene expression of coding and non-coding RNAs needed for gametogenesis. Required for telomere attachment to nuclear envelope and gametogenesis. May also function on endocytic vesicles as a receptor for Rab5-GDP and participate in the activation of Rab5. The polypeptide is SUN domain-containing protein 2 (Mus musculus (Mouse)).